Here is a 416-residue protein sequence, read N- to C-terminus: 46 kDa surface antigen (416 aa).

An N-terminal signal peptide occupies residues 1 to 27 (MLRKKFLYSSAIYATSLASIIAFVAAG). Cys-28 carries the N-palmitoyl cysteine lipid modification. Cys-28 carries the S-diacylglycerol cysteine lipid modification.

The protein localises to the cell membrane. The chain is 46 kDa surface antigen (p46) from Mesomycoplasma hyopneumoniae (strain 232) (Mycoplasma hyopneumoniae).